We begin with the raw amino-acid sequence, 463 residues long: MSNRMWGGRFASGPAEIMEEINASIGFDRRLASQDIRGSLAHVAMLGSQGILPAEDVAAIEAGLKSVEAEIARGEFVFRRELEDIHMAVESRLTEIVGPAAGRLHTARSRNDQVATDMRLWVRDTLDALDAQVADLQRALAETAVKHAGTVMPGFTHLQSAQPVTFGHHCLAYVEMLARDRGRFRDARARLNECPLGAAALAGTSFPIDRHATAAALGFDRPTANSLDSVADRDFALESLSAASICAVHLSRFAEELVVWTSAQFGFVRLSDGFTTGSSIMPQKRNPDAAELVRAKAGRIIGALTGLLIVMKGLPLAYSKDMQEDKEGTFDALQSLSLCLAAMAGMVRDLEPVAETLKRAAGSGYATATDLADWLVRELNMPFRQAHHVTGRVVAAASERGIGLEELSLQDMQAVEAGITDAVFAVLGVENSVASRTSYGGTAPDNVRRQAEGWLEKLGPVEK.

This sequence belongs to the lyase 1 family. Argininosuccinate lyase subfamily.

It is found in the cytoplasm. The catalysed reaction is 2-(N(omega)-L-arginino)succinate = fumarate + L-arginine. The protein operates within amino-acid biosynthesis; L-arginine biosynthesis; L-arginine from L-ornithine and carbamoyl phosphate: step 3/3. The chain is Argininosuccinate lyase from Methylorubrum extorquens (strain CM4 / NCIMB 13688) (Methylobacterium extorquens).